The sequence spans 778 residues: Mitochondrial intermediate peptidase (778 aa).

Residues 1–37 (MIRTVTRPRQWQRWVYSSCLLQRAVPPAAARQQPRFT) constitute a mitochondrion transit peptide. His557 serves as a coordination point for Zn(2+). Residue Glu558 is part of the active site. His561 and His564 together coordinate Zn(2+).

The protein belongs to the peptidase M3 family. Requires Zn(2+) as cofactor.

It is found in the mitochondrion matrix. The enzyme catalyses Release of an N-terminal octapeptide as second stage of processing of some proteins imported into the mitochondrion.. In terms of biological role, cleaves proteins, imported into the mitochondrion, to their mature size. While most mitochondrial precursor proteins are processed to the mature form in one step by mitochondrial processing peptidase (MPP), the sequential cleavage by MIP of an octapeptide after initial processing by MPP is a required step for a subgroup of nuclear-encoded precursor proteins destined for the matrix or the inner membrane. The polypeptide is Mitochondrial intermediate peptidase (OCT1) (Chaetomium globosum (strain ATCC 6205 / CBS 148.51 / DSM 1962 / NBRC 6347 / NRRL 1970) (Soil fungus)).